Consider the following 288-residue polypeptide: Probable aquaporin PIP2-2 (288 aa).

The interval 1-21 is disordered; the sequence is MAKDIEASAPEGGEFSAKDYT. 2 helical membrane passes run 42–62 and 81–101; these read AVIAEFIATLLFLYITVATVI and GVGILGIAWAFGGMIFILVYC. The NPA 1 motif lies at 111–113; that stretch reads NPA. Helical transmembrane passes span 130–150, 172–192, and 204–224; these read VLYIIAQCLGAICGVGLVKGF, GTGLGAEIIGTFVLVYTVFSA, and IPVLAPLPIGFAVFMVHLATI. The short motif at 232 to 234 is the NPA 2 element; the sequence is NPA. A helical transmembrane segment spans residues 254–274; that stretch reads IFWVGPLIGAAIAAAYHQYVL.

It belongs to the MIP/aquaporin (TC 1.A.8) family. PIP (TC 1.A.8.11) subfamily. As to expression, expressed in roots, leaves and anthers.

Its subcellular location is the cell membrane. Aquaporins facilitate the transport of water and small neutral solutes across cell membranes. The polypeptide is Probable aquaporin PIP2-2 (PIP2-2) (Oryza sativa subsp. japonica (Rice)).